The primary structure comprises 300 residues: Non-secreted LysM effector LysM16 (300 aa).

The LysM domain occupies 176–222 (EWHTVFSGDTCQLIEAEYGITLEKFIALNTYVNSTCGNIWPDYAYCV).

It belongs to the secreted LysM effector family.

In terms of biological role, non-secreted LysM effector that might be involved in manipulation of host defenses for successful infection. This is Non-secreted LysM effector LysM16 from Penicillium expansum (Blue mold rot fungus).